Here is a 1266-residue protein sequence, read N- to C-terminus: Phosphatidylinositol 3,4,5-trisphosphate 5-phosphatase 2A (1266 aa).

Positions 15 to 111 constitute an SH2 domain; sequence WMHRDLSRAA…GLVTTLLYPV (97 aa). The segment covering 114–123 has biased composition (basic and acidic residues); that stretch reads EETTEDRDYS. Disordered regions lie at residues 114–159 and 879–951; these read EETT…NVTA and DMGG…DATT. The span at 136–159 shows a compositional bias: polar residues; that stretch reads TASTSSMTGSALVSTDTPPENVTA. 2 stretches are compositionally biased toward basic and acidic residues: residues 915-924 and 931-944; these read RVSEEGEKSS and TKEE…KQDP. An NPXY motif motif is present at residues 958-961; that stretch reads NPAY. The residue at position 961 (Tyr961) is a Phosphotyrosine. Disordered stretches follow at residues 986 to 1132 and 1147 to 1174; these read PLAN…SALD and EVEY…SFPS. Low complexity predominate over residues 994-1012; it reads PPAGSVGKSKPPSGSSAQG. The segment covering 1045–1056 has biased composition (pro residues); that stretch reads RPPPDFPPPPLP. In terms of domain architecture, SAM spans 1203–1266; that stretch reads SVDCSVGEWL…LLASLKQQQK (64 aa).

The protein belongs to the inositol 1,4,5-trisphosphate 5-phosphatase family. In terms of processing, tyrosine phosphorylated by the members of the SRC family after exposure to a diverse array of extracellular stimuli.

Its subcellular location is the cytoplasm. The protein resides in the cytosol. It is found in the cytoskeleton. The protein localises to the membrane. It localises to the cell projection. Its subcellular location is the filopodium. The protein resides in the lamellipodium. It is found in the nucleus. The protein localises to the nucleus speckle. It carries out the reaction a 1,2-diacyl-sn-glycero-3-phospho-(1D-myo-inositol-3,4,5-trisphosphate) + H2O = a 1,2-diacyl-sn-glycero-3-phospho-(1D-myo-inositol-3,4-bisphosphate) + phosphate. Its function is as follows. Phosphatidylinositol (PtdIns) phosphatase that specifically hydrolyzes the 5-phosphate of phosphatidylinositol-3,4,5-trisphosphate (PtdIns(3,4,5)P3) to produce PtdIns(3,4)P2, thereby negatively regulating the PI3K (phosphoinositide 3-kinase) pathways. Plays a central role in regulation of PI3K-dependent insulin signaling, although the precise molecular mechanisms and signaling pathways remain unclear. Part of a signaling pathway that regulates actin cytoskeleton remodeling. Required for the maintenance and dynamic remodeling of actin structures as well as in endocytosis, having a major impact on ligand-induced EGFR internalization and degradation. Participates in regulation of cortical and submembraneous actin. Regulates cell adhesion and cell spreading. Acts as a negative regulator of the FC-gamma-RIIA receptor (FCGR2A). Mediates signaling from the FC-gamma-RIIB receptor (FCGR2B), playing a central role in terminating signal transduction from activating immune/hematopoietic cell receptor systems. May also hydrolyze PtdIns(1,3,4,5)P4, and could thus affect the levels of the higher inositol polyphosphates like InsP6. This is Phosphatidylinositol 3,4,5-trisphosphate 5-phosphatase 2A (inppl1a) from Danio rerio (Zebrafish).